The chain runs to 1118 residues: Cytospin-A (1118 aa).

Disordered regions lie at residues 1–50 (MKKA…AALS), 75–175 (KKSN…DNQI), 294–324 (SLSP…GSVE), and 359–391 (SSDD…NASE). Composition is skewed to low complexity over residues 34 to 48 (APTG…AAAA), 80 to 90 (SSAAPSAPAPA), and 99 to 113 (KSST…RSTS). The segment covering 120–131 (SSTRERLRERTR) has biased composition (basic and acidic residues). Over residues 133–145 (NQSKKLPSVSQGA) the composition is skewed to polar residues. A compositionally biased stretch (basic and acidic residues) spans 158–171 (TATEGDIRMSKSKS). The stretch at 168–281 (KSKSDNQISD…LNALGFSLEQ (114 aa)) forms a coiled coil. Polar residues predominate over residues 294 to 304 (SLSPEITPGNQ). Positions 359-373 (SSDDALDAPSSSESE) are enriched in low complexity. 3 positions are modified to phosphoserine: Ser-385, Ser-386, and Ser-390. Coiled-coil stretches lie at residues 395-450 (ACLT…MESL) and 488-808 (RYME…RGRV). A phosphoserine mark is found at Ser-869, Ser-882, and Ser-888. The segment at 916–999 (EHLLRTSSTS…STRSRIREER (84 aa)) is disordered. Residues 947–957 (RSSEEMKRDIS) are compositionally biased toward basic and acidic residues. Low complexity predominate over residues 972 to 992 (TTSPQLSLSSSPTASVTPSTR). In terms of domain architecture, Calponin-homology (CH) spans 1012–1117 (GSKRNALLKW…YVTAIYKYFE (106 aa)).

The protein belongs to the cytospin-A family. In terms of assembly, may interact with both microtubules and actin cytoskeleton.

Its subcellular location is the cytoplasm. It is found in the cytoskeleton. The protein localises to the spindle. It localises to the cell junction. The protein resides in the gap junction. Its function is as follows. Involved in cytokinesis and spindle organization. May play a role in actin cytoskeleton organization and microtubule stabilization and hence required for proper cell adhesion and migration. The polypeptide is Cytospin-A (Specc1l) (Rattus norvegicus (Rat)).